The following is a 354-amino-acid chain: UPF0283 protein YcjF (354 aa).

The next 3 helical transmembrane spans lie at methionine 71–valine 91, isoleucine 101–valine 121, and glutamate 214–tryptophan 234.

Belongs to the UPF0283 family.

It localises to the cell inner membrane. In Yersinia enterocolitica, this protein is UPF0283 protein YcjF (ycjF).